A 563-amino-acid polypeptide reads, in one-letter code: MAEICASAAPISTKNTSVEELRRSVTYHPSVWRDHFLSYTNDVTEITAAEKEELEKQKEKVKNLLDQTPNDSTLKIELIDAIQRLGFGYHFEEVIDESLGEVYDRYEMPSGKDDEDEIRVRSLRFRLLRQQGYRVPCDVFEKLLDDKGNFKDSLITDVEGLLSLYEASNYGINGEEIMDKALKFSSSHLEGSIHKMPTSLSRRVKEALDMPISKTLTRLGARKFISLYQEDESHNELLLKFAKLDFNIVQKMHQRELHHITRWWEGLEFGKKLPFARDRVVECFFWILGVYFEPKYEIARRFLTKVISMTSILDDIYDVYGSLDELRRLTHAIQRWDISVGDELPPYMRICYEALLGVYSEMEDEMAKKGQSYRLLYARQEMIKLVMAYMVEAEWCFSKYFPTMEEYMKQALVSGAYMMLSTTSLVGMEDLNITKHDFDWITSEPPMLRAASVICRLMDDMVGHGIEQKIISVDCYMRENGCSKEEACREFWNRVKKAWKCMNEECLEPRAASMAILARVLNLARVINLLYVGEDAYGSSSTKTKNFIKSVLVDPIHSIEYHI.

Positions threonine 44–aspartate 71 form a coiled coil. Residues aspartate 314 and aspartate 318 each contribute to the Mn(2+) site. The short motif at aspartate 314–aspartate 318 is the DDXXD motif element. Homodimerization regions lie at residues tyrosine 320–leucine 326 and glutamate 392–glutamate 429. Aspartate 459 and glutamate 467 together coordinate Mn(2+).

It belongs to the terpene synthase family. Homodimer. Requires Mn(2+) as cofactor. It depends on Mg(2+) as a cofactor. As to expression, expressed in peltate glandular trichomes. Present at low levels in flowers, leaves and stems.

The enzyme catalyses (2E,6E)-farnesyl diphosphate = (-)-germacrene D + diphosphate. The protein operates within secondary metabolite biosynthesis; terpenoid biosynthesis. Functionally, involved in the biosynthesis of phenolic sesquiterpenes natural products. Sesquiterpene synthase that catalyzes mainly the formation of (-)-germacrene D and minor amounts of other sesquiterpenes (e.g. bicyclo-germacrene) from farnesyl diphosphate (FPP). Also triggers moderate amounts formation of myrcene, limonene, terpinolene and linalool in the presence of geranyl diphosphate (GPP). This is (-)-germacrene D synthase from Origanum vulgare (Wild marjoram).